A 1354-amino-acid chain; its full sequence is Eukaryotic translation initiation factor 3 subunit A (1354 aa).

Lys68 carries the N6-acetyllysine modification. The stretch at 82–120 forms a coiled coil; it reads NIKSLEDVVRAYLKLAEEKTEAAKEESQQMVLDIEDLDN. One can recognise a PCI domain in the interval 315-498; it reads MQRMSTRVLL…RTLSFGSDLN (184 aa). A phosphoserine mark is found at Ser492 and Ser584. The segment at 664 to 835 is interaction with EIF3B; sequence LDPDFIMAKQ…REERERAERA (172 aa). 3 disordered regions span residues 809 to 844, 866 to 1249, and 1262 to 1354; these read EKEE…LREY, EERE…RDRD, and DLRD…TVRR. 4 stretches are compositionally biased toward basic and acidic residues: residues 866 to 1136, 1148 to 1249, 1262 to 1302, and 1310 to 1343; these read EERE…DDAR, GWRE…RDRD, DLRD…DPPR, and SRER…TKNE. Residue Ser895 is modified to Phosphoserine. A 1; truncated repeat occupies 924 to 931; it reads DDERPHRR. Positions 924 to 1143 are 22 X 10 AA approximate tandem repeats of [DA]-[DE]-[ED]-R-[PLIGFSV]-[RPS]-[RW]-[RL]-[GNIHT]-[DGLPTAM]; that stretch reads DDERPHRRDE…DARPGPWRPF (220 aa). Residues 932–941 form repeat 2; sequence DEDRLRRLGG. The 3; approximate repeat unit spans residues 942 to 951; it reads DDEERESSLR. Ser949 is modified (phosphoserine). 18 tandem repeats follow at residues 953–962, 963–972, 973–982, 983–992, 993–1002, 1003–1012, 1013–1022, 1023–1032, 1033–1042, 1043–1052, 1053–1062, 1064–1073, 1074–1083, 1084–1093, 1094–1103, 1104–1113, 1114–1123, and 1124–1133. Ser1038 bears the Phosphoserine mark. A 22; approximate repeat occupies 1134–1143; sequence DARPGPWRPF. Residues Ser1159 and Ser1233 each carry the phosphoserine modification. Phosphoserine is present on residues Ser1310 and Ser1336.

Belongs to the eIF-3 subunit A family. In terms of assembly, component of the eukaryotic translation initiation factor 3 (eIF-3) complex, which is composed of 13 subunits: EIF3A, EIF3B, EIF3C, EIF3D, EIF3E, EIF3F, EIF3G, EIF3H, EIF3I, EIF3J, EIF3K, EIF3L and EIF3M. The eIF-3 complex appears to include 3 stable modules: module A is composed of EIF3A, EIF3B, EIF3G and EIF3I; module B is composed of EIF3F, EIF3H, and EIF3M; and module C is composed of EIF3C, EIF3D, EIF3E, EIF3L and EIF3K. EIF3C of module C binds EIF3B of module A and EIF3H of module B, thereby linking the three modules. EIF3J is a labile subunit that binds to the eIF-3 complex via EIF3B. The eIF-3 complex interacts with RPS6KB1 under conditions of nutrient depletion. Mitogenic stimulation leads to binding and activation of a complex composed of MTOR and RPTOR, leading to phosphorylation and release of RPS6KB1 and binding of EIF4B to eIF-3. Interacts with EIF4G1. Also interacts with KRT7 and PIWIL2. In terms of processing, phosphorylated. Phosphorylation is enhanced upon serum stimulation.

The protein resides in the cytoplasm. RNA-binding component of the eukaryotic translation initiation factor 3 (eIF-3) complex, which is required for several steps in the initiation of protein synthesis. The eIF-3 complex associates with the 40S ribosome and facilitates the recruitment of eIF-1, eIF-1A, eIF-2:GTP:methionyl-tRNAi and eIF-5 to form the 43S pre-initiation complex (43S PIC). The eIF-3 complex stimulates mRNA recruitment to the 43S PIC and scanning of the mRNA for AUG recognition. The eIF-3 complex is also required for disassembly and recycling of post-termination ribosomal complexes and subsequently prevents premature joining of the 40S and 60S ribosomal subunits prior to initiation. The eIF-3 complex specifically targets and initiates translation of a subset of mRNAs involved in cell proliferation, including cell cycling, differentiation and apoptosis, and uses different modes of RNA stem-loop binding to exert either translational activation or repression. The sequence is that of Eukaryotic translation initiation factor 3 subunit A (Eif3a) from Rattus norvegicus (Rat).